The primary structure comprises 96 residues: Large ribosomal subunit protein uL23 (96 aa).

Belongs to the universal ribosomal protein uL23 family. In terms of assembly, part of the 50S ribosomal subunit. Contacts protein L29, and trigger factor when it is bound to the ribosome.

Its function is as follows. One of the early assembly proteins it binds 23S rRNA. One of the proteins that surrounds the polypeptide exit tunnel on the outside of the ribosome. Forms the main docking site for trigger factor binding to the ribosome. The chain is Large ribosomal subunit protein uL23 from Clostridioides difficile (strain 630) (Peptoclostridium difficile).